Consider the following 124-residue polypeptide: Large ribosomal subunit protein bL17 (124 aa).

This sequence belongs to the bacterial ribosomal protein bL17 family. As to quaternary structure, part of the 50S ribosomal subunit. Contacts protein L32.

The polypeptide is Large ribosomal subunit protein bL17 (Acidithiobacillus ferrooxidans (strain ATCC 23270 / DSM 14882 / CIP 104768 / NCIMB 8455) (Ferrobacillus ferrooxidans (strain ATCC 23270))).